Here is a 627-residue protein sequence, read N- to C-terminus: Protein zyg-11 homolog A (627 aa).

LRR repeat units follow at residues 123–146 (LPNLGSLDISNTLVTNISALLSCK), 203–227 (LPNLTSLDISGGTDVTDQAVESFLQ), and 409–432 (ITSILALKLSPEEMGQLQEELIMA).

It belongs to the zyg-11 family.

In terms of biological role, probably acts as a target recruitment subunit in an E3 ubiquitin ligase complex ZYGA-CUL2-elongin BC. The chain is Protein zyg-11 homolog A (Zyg11a) from Mus musculus (Mouse).